The chain runs to 315 residues: Putative HTH-type transcriptional regulatory protein PH1808 (315 aa).

The region spanning 131–189 (LKALREEHGYSITELAGILGISRKSLQRYEKGESVVSLEVALRLEEVFDEPLVKPIDVL) is the HTH cro/C1-type domain. The segment at residues 142–161 (ITELAGILGISRKSLQRYEK) is a DNA-binding region (H-T-H motif).

This chain is Putative HTH-type transcriptional regulatory protein PH1808, found in Pyrococcus horikoshii (strain ATCC 700860 / DSM 12428 / JCM 9974 / NBRC 100139 / OT-3).